Here is a 414-residue protein sequence, read N- to C-terminus: Imidazolonepropionase (414 aa).

Residues His-77 and His-79 each contribute to the Fe(3+) site. Zn(2+)-binding residues include His-77 and His-79. 4-imidazolone-5-propanoate contacts are provided by Arg-86, Tyr-149, and His-184. Residue Tyr-149 participates in N-formimidoyl-L-glutamate binding. His-249 is a Fe(3+) binding site. Residue His-249 coordinates Zn(2+). Glu-252 is a 4-imidazolone-5-propanoate binding site. Fe(3+) is bound at residue Asp-323. Asp-323 lines the Zn(2+) pocket. The N-formimidoyl-L-glutamate site is built by Asn-325 and Gly-327. A 4-imidazolone-5-propanoate-binding site is contributed by Ser-328.

This sequence belongs to the metallo-dependent hydrolases superfamily. HutI family. It depends on Zn(2+) as a cofactor. Fe(3+) is required as a cofactor.

The protein resides in the cytoplasm. The catalysed reaction is 4-imidazolone-5-propanoate + H2O = N-formimidoyl-L-glutamate. It participates in amino-acid degradation; L-histidine degradation into L-glutamate; N-formimidoyl-L-glutamate from L-histidine: step 3/3. Catalyzes the hydrolytic cleavage of the carbon-nitrogen bond in imidazolone-5-propanoate to yield N-formimidoyl-L-glutamate. It is the third step in the universal histidine degradation pathway. This Phocaeicola vulgatus (strain ATCC 8482 / DSM 1447 / JCM 5826 / CCUG 4940 / NBRC 14291 / NCTC 11154) (Bacteroides vulgatus) protein is Imidazolonepropionase.